Reading from the N-terminus, the 87-residue chain is Putative membrane protein insertion efficiency factor (87 aa).

The protein belongs to the UPF0161 family.

The protein localises to the cell membrane. Functionally, could be involved in insertion of integral membrane proteins into the membrane. This is Putative membrane protein insertion efficiency factor from Ligilactobacillus salivarius (strain UCC118) (Lactobacillus salivarius).